The primary structure comprises 206 residues: dITP/XTP pyrophosphatase (206 aa).

Serine 10–lysine 15 is a binding site for substrate. Aspartate 75 (proton acceptor) is an active-site residue. Aspartate 75 contacts Mg(2+). Substrate contacts are provided by residues serine 76, phenylalanine 158–aspartate 161, lysine 181, and histidine 186–arginine 187.

The protein belongs to the HAM1 NTPase family. In terms of assembly, homodimer. Mg(2+) serves as cofactor.

It carries out the reaction XTP + H2O = XMP + diphosphate + H(+). It catalyses the reaction dITP + H2O = dIMP + diphosphate + H(+). The catalysed reaction is ITP + H2O = IMP + diphosphate + H(+). In terms of biological role, pyrophosphatase that catalyzes the hydrolysis of nucleoside triphosphates to their monophosphate derivatives, with a high preference for the non-canonical purine nucleotides XTP (xanthosine triphosphate), dITP (deoxyinosine triphosphate) and ITP. Seems to function as a house-cleaning enzyme that removes non-canonical purine nucleotides from the nucleotide pool, thus preventing their incorporation into DNA/RNA and avoiding chromosomal lesions. The protein is dITP/XTP pyrophosphatase of Nocardia farcinica (strain IFM 10152).